Consider the following 539-residue polypeptide: Phosphoenolpyruvate carboxykinase (ATP) (539 aa).

Positions 64, 206, and 212 each coordinate substrate. ATP contacts are provided by residues K212, H231, and 247–255 (GLSGTGKTT). Residues K212 and H231 each coordinate Mn(2+). D268 is a Mn(2+) binding site. Residues E296, R332, 448–449 (RI), and T454 contribute to the ATP site. R332 provides a ligand contact to substrate.

The protein belongs to the phosphoenolpyruvate carboxykinase (ATP) family. Monomer. The cofactor is Mn(2+).

Its subcellular location is the cytoplasm. The enzyme catalyses oxaloacetate + ATP = phosphoenolpyruvate + ADP + CO2. It functions in the pathway carbohydrate biosynthesis; gluconeogenesis. Its function is as follows. Involved in the gluconeogenesis. Catalyzes the conversion of oxaloacetate (OAA) to phosphoenolpyruvate (PEP) through direct phosphoryl transfer between the nucleoside triphosphate and OAA. This chain is Phosphoenolpyruvate carboxykinase (ATP), found in Salmonella gallinarum (strain 287/91 / NCTC 13346).